Here is a 211-residue protein sequence, read N- to C-terminus: N-(5'-phosphoribosyl)anthranilate isomerase (211 aa).

It belongs to the TrpF family.

The enzyme catalyses N-(5-phospho-beta-D-ribosyl)anthranilate = 1-(2-carboxyphenylamino)-1-deoxy-D-ribulose 5-phosphate. It functions in the pathway amino-acid biosynthesis; L-tryptophan biosynthesis; L-tryptophan from chorismate: step 3/5. This Zymomonas mobilis subsp. mobilis (strain ATCC 31821 / ZM4 / CP4) protein is N-(5'-phosphoribosyl)anthranilate isomerase.